The sequence spans 193 residues: Large ribosomal subunit protein uL11 (193 aa).

This sequence belongs to the universal ribosomal protein uL11 family. In terms of assembly, part of the ribosomal stalk of the 50S ribosomal subunit. Interacts with L10 and the large rRNA to form the base of the stalk. L10 forms an elongated spine to which L12 dimers bind in a sequential fashion forming a multimeric L10(L12)X complex. Post-translationally, one or more lysine residues are methylated.

Forms part of the ribosomal stalk which helps the ribosome interact with GTP-bound translation factors. This is Large ribosomal subunit protein uL11 from Mycoplasmopsis synoviae (strain 53) (Mycoplasma synoviae).